Reading from the N-terminus, the 232-residue chain is AA9 family lytic polysaccharide monooxygenase C (232 aa).

The signal sequence occupies residues 1–19; sequence MKAAVSLALLVAVAGAASA. The Cu(2+) site is built by His20 and His91. The cysteines at positions 61 and 180 are disulfide-linked. Residues His166 and Gln175 each coordinate O2. Tyr177 contributes to the Cu(2+) binding site. Asn184 is a glycosylation site (N-linked (GlcNAc...) asparagine).

The protein belongs to the polysaccharide monooxygenase AA9 family. Cu(2+) serves as cofactor.

It localises to the secreted. The catalysed reaction is [(1-&gt;4)-beta-D-glucosyl]n+m + reduced acceptor + O2 = 4-dehydro-beta-D-glucosyl-[(1-&gt;4)-beta-D-glucosyl]n-1 + [(1-&gt;4)-beta-D-glucosyl]m + acceptor + H2O.. In terms of biological role, lytic polysaccharide monooxygenase (LPMO) that depolymerizes crystalline and amorphous polysaccharides via the oxidation of scissile alpha- or beta-(1-4)-glycosidic bonds, yielding C1 or C4 oxidation products. Catalysis by LPMOs requires the reduction of the active-site copper from Cu(II) to Cu(I) by a reducing agent and H(2)O(2) or O(2) as a cosubstrate. The sequence is that of AA9 family lytic polysaccharide monooxygenase C from Malbranchea cinnamomea (Thermophilic fungus).